Consider the following 341-residue polypeptide: Nicotinate-nucleotide--dimethylbenzimidazole phosphoribosyltransferase (341 aa).

The active-site Proton acceptor is E306.

The protein belongs to the CobT family.

The catalysed reaction is 5,6-dimethylbenzimidazole + nicotinate beta-D-ribonucleotide = alpha-ribazole 5'-phosphate + nicotinate + H(+). The protein operates within nucleoside biosynthesis; alpha-ribazole biosynthesis; alpha-ribazole from 5,6-dimethylbenzimidazole: step 1/2. Functionally, catalyzes the synthesis of alpha-ribazole-5'-phosphate from nicotinate mononucleotide (NAMN) and 5,6-dimethylbenzimidazole (DMB). This Methylocella silvestris (strain DSM 15510 / CIP 108128 / LMG 27833 / NCIMB 13906 / BL2) protein is Nicotinate-nucleotide--dimethylbenzimidazole phosphoribosyltransferase.